The following is a 151-amino-acid chain: Thymosin beta (151 aa).

4 consecutive repeat copies span residues 24-29 (LKKVET), 62-67 (LHSTPV), 100-105 (LKKTET), and 134-139 (LHHVET). Residues 24–139 (LKKVETTEKN…DKSALHHVET (116 aa)) form a 4 X 6 AA repeat of L-[KH]-[KSH]-[VT]-[EP]-[TV] region.

It belongs to the thymosin beta family. Interacts (via repeats 1, 2 and 4) with G-actin in a 1:3 ratio. Interacts (via repeats 2 and 3) with F-actin. As to expression, at the comma stage, enriched in the developing nerve ring (at protein level). Ubiquitously expressed in larvae and adults with enrichment in the spermatheca, the intestinal tract and the posterior bulb of the pharynx (at protein level). Expressed in oocytes and in the gonad (at protein level).

Its subcellular location is the cytoplasm. The protein localises to the cell cortex. It localises to the cell junction. The protein resides in the cytoskeleton. Functionally, plays an important role in the organization of the cytoskeleton by regulating actin polymerization in two ways. Firstly, by binding to and sequestering actin monomers (G actin) inhibits actin polymerization. Secondly, by binding directly filamentous actin (F actin) promotes actin polymerization. Regulates the formation of cortical actin in oocytes conferring them enough rigidity to sustain the contractions during ovulation. The polypeptide is Thymosin beta (Caenorhabditis elegans).